The sequence spans 392 residues: ADP-ribosylhydrolase ARH1 (392 aa).

Residues Ser-79, Asp-80, and Asp-81 each contribute to the Mg(2+) site. Lys-109 lines the substrate pocket. Residues 125 to 127 form a substrate region; that stretch reads IQT. Gly-159 provides a ligand contact to substrate. Substrate regions lie at residues 192–194, 309–311, and 315–316; these read HNN, FSG, and SS. Residues Asp-348, Asp-350, and Ser-351 each coordinate Mg(2+).

This sequence belongs to the ADP-ribosylglycohydrolase family. As to quaternary structure, monomer. It depends on Mg(2+) as a cofactor.

The catalysed reaction is N(omega)-(ADP-D-ribosyl)-L-arginyl-[protein] + H2O = ADP-D-ribose + L-arginyl-[protein]. Specifically acts as an arginine mono-ADP-ribosylhydrolase by mediating the removal of mono-ADP-ribose attached to arginine residues on proteins. This Dictyostelium discoideum (Social amoeba) protein is ADP-ribosylhydrolase ARH1 (adprh).